We begin with the raw amino-acid sequence, 234 residues long: Kappa-casein (234 aa).

A signal peptide spans 1 to 21 (MMKSFLLVVNIVALTLPFLAA). 3 tandem repeats follow at residues 127–153 (LGKA…QPTV), 154–179 (SAGD…EEAR), and 180–207 (ESPE…PRES). The tract at residues 127 to 207 (LGKATILSTD…AVPSEEPRES (81 aa)) is 3 X 27 AA tandem repeats. The tract at residues 143–234 (QTPVSAAQPT…STGPAIASMA (92 aa)) is disordered. O-linked (GalNAc...) threonine glycosylation occurs at threonine 144. A compositionally biased stretch (polar residues) spans 144–171 (TPVSAAQPTVSAGDTPEVSSQFIDTPDT). At threonine 158 the chain carries Phosphothreonine. Serine 162 is modified (phosphoserine; alternate). Serine 162 is a glycosylation site (O-linked (GalNAc...) serine; alternate).

It belongs to the kappa-casein family. Mammary gland specific. Secreted in milk.

The protein resides in the secreted. Kappa-casein stabilizes micelle formation, preventing casein precipitation in milk. The chain is Kappa-casein (CSN3) from Cavia porcellus (Guinea pig).